The primary structure comprises 233 residues: Purine nucleoside phosphorylase DeoD-type (233 aa).

H4 contacts a purine D-ribonucleoside. Residues G20, R24, R43, and 87 to 90 each bind phosphate; that span reads RIGT. Residues 179–181 and 203–204 each bind a purine D-ribonucleoside; these read EME and SD. The Proton donor role is filled by D204.

The protein belongs to the PNP/UDP phosphorylase family. In terms of assembly, homohexamer; trimer of homodimers.

The enzyme catalyses a purine D-ribonucleoside + phosphate = a purine nucleobase + alpha-D-ribose 1-phosphate. The catalysed reaction is a purine 2'-deoxy-D-ribonucleoside + phosphate = a purine nucleobase + 2-deoxy-alpha-D-ribose 1-phosphate. In terms of biological role, catalyzes the reversible phosphorolytic breakdown of the N-glycosidic bond in the beta-(deoxy)ribonucleoside molecules, with the formation of the corresponding free purine bases and pentose-1-phosphate. The polypeptide is Purine nucleoside phosphorylase DeoD-type (Helicobacter pylori (strain J99 / ATCC 700824) (Campylobacter pylori J99)).